The sequence spans 212 residues: Protein FAM177A1 (212 aa).

M1 carries the N-acetylmethionine modification. Basic and acidic residues predominate over residues 1 to 11 (MEGEPASREEG). Positions 1-33 (MEGEPASREEGEAVNASGAAAASAFRESAQQMS) are disordered. The span at 13-29 (AVNASGAAAASAFRESA) shows a compositional bias: low complexity. The residue at position 69 (S69) is a Phosphoserine. T70 is modified (phosphothreonine). Positions 135–172 (IDEYYRMKKEEEEEEEENRMSEEAERQYQQNKLQADSV) form a coiled coil. Residues 146 to 179 (EEEEEENRMSEEAERQYQQNKLQADSVVQSDQPE) are disordered. Positions 161 to 179 (QYQQNKLQADSVVQSDQPE) are enriched in polar residues.

The protein belongs to the FAM177 family.

In Bos taurus (Bovine), this protein is Protein FAM177A1 (FAM177A1).